The sequence spans 349 residues: Fructose-1,6-bisphosphatase class 1 (349 aa).

Mg(2+)-binding residues include E113, D135, I137, and D138. Substrate contacts are provided by residues 138 to 141, N230, Y258, and K288; that span reads DGSS. Mg(2+) is bound at residue E294.

The protein belongs to the FBPase class 1 family. In terms of assembly, homotetramer. It depends on Mg(2+) as a cofactor.

Its subcellular location is the cytoplasm. It catalyses the reaction beta-D-fructose 1,6-bisphosphate + H2O = beta-D-fructose 6-phosphate + phosphate. It participates in carbohydrate biosynthesis; Calvin cycle. This is Fructose-1,6-bisphosphatase class 1 from Nostoc punctiforme (strain ATCC 29133 / PCC 73102).